We begin with the raw amino-acid sequence, 153 residues long: Regulatory protein RecX (153 aa).

It belongs to the RecX family.

The protein localises to the cytoplasm. Its function is as follows. Modulates RecA activity. In Vibrio vulnificus (strain CMCP6), this protein is Regulatory protein RecX.